A 267-amino-acid chain; its full sequence is Regulatory protein RecX (267 aa).

Belongs to the RecX family.

It localises to the cytoplasm. Its function is as follows. Modulates RecA activity. The sequence is that of Regulatory protein RecX from Staphylococcus haemolyticus (strain JCSC1435).